The primary structure comprises 886 residues: DNA mismatch repair protein MutS (886 aa).

641 to 648 is an ATP binding site; it reads GPNMAGKS.

The protein belongs to the DNA mismatch repair MutS family.

Its function is as follows. This protein is involved in the repair of mismatches in DNA. It is possible that it carries out the mismatch recognition step. This protein has a weak ATPase activity. The protein is DNA mismatch repair protein MutS of Rickettsia akari (strain Hartford).